An 800-amino-acid chain; its full sequence is Phenylalanine--tRNA ligase beta subunit (800 aa).

The tRNA-binding domain occupies 39-154; it reads TKDIKNLVVG…ESQVPGTDAL (116 aa). The B5 domain occupies 408-483; sequence AFITPIDITA…RIYGYDDIPS (76 aa). Aspartate 461, aspartate 467, glutamate 470, and glutamate 471 together coordinate Mg(2+). An FDX-ACB domain is found at 708-800; it reads PIFPGMSRDI…ALIEQGAVIR (93 aa).

This sequence belongs to the phenylalanyl-tRNA synthetase beta subunit family. Type 1 subfamily. Tetramer of two alpha and two beta subunits. Mg(2+) is required as a cofactor.

The protein localises to the cytoplasm. The enzyme catalyses tRNA(Phe) + L-phenylalanine + ATP = L-phenylalanyl-tRNA(Phe) + AMP + diphosphate + H(+). The polypeptide is Phenylalanine--tRNA ligase beta subunit (Staphylococcus aureus (strain bovine RF122 / ET3-1)).